We begin with the raw amino-acid sequence, 371 residues long: Protein NDRG2 (371 aa).

The tract at residues 1 to 21 (MAELQEVQITEEKPLLPGQTP) is disordered. A2 is modified (N-acetylalanine). Position 20 is a phosphothreonine (T20). A phosphoserine mark is found at S326 and S328. The residue at position 330 (T330) is a Phosphothreonine. A Phosphoserine modification is found at S332. Position 334 is a phosphothreonine (T334). Residues 334 to 371 (TSAASVDGNRSRSRTLSQSSESGTLSSGPPGHTMEVSC) form a disordered region. Residues S335, S338, and S344 each carry the phosphoserine modification. The span at 347–361 (RTLSQSSESGTLSSG) shows a compositional bias: low complexity. T348 bears the Phosphothreonine mark. Phosphoserine occurs at positions 350, 352, 353, and 355. At T357 the chain carries Phosphothreonine. Phosphoserine is present on S370.

This sequence belongs to the NDRG family. In terms of assembly, interacts with CTNNB1.

The protein localises to the cytoplasm. Its subcellular location is the perinuclear region. The protein resides in the cell projection. It localises to the growth cone. Functionally, contributes to the regulation of the Wnt signaling pathway. Down-regulates CTNNB1-mediated transcriptional activation of target genes, such as CCND1, and may thereby act as tumor suppressor. May be involved in dendritic cell and neuron differentiation. This Pongo abelii (Sumatran orangutan) protein is Protein NDRG2 (NDRG2).